Reading from the N-terminus, the 226-residue chain is Cell division protein SepF (226 aa).

Residues 20 to 116 are disordered; that stretch reads RAYDDAGYDK…ESLTYHTRDN (97 aa). The span at 22 to 44 shows a compositional bias: basic and acidic residues; sequence YDDAGYDKGGYRESRYRSSRYSE. The segment covering 45 to 56 has biased composition (acidic residues); that stretch reads DFGDEDDEDEEA. Positions 62–95 are enriched in basic and acidic residues; that stretch reads RRGDRSRLERAAARSGDVDHNVEGEQPERVERAS. Polar residues predominate over residues 97-111; it reads RSITRSAEPSESLTY.

Belongs to the SepF family. As to quaternary structure, homodimer. Interacts with FtsZ.

It is found in the cytoplasm. Cell division protein that is part of the divisome complex and is recruited early to the Z-ring. Probably stimulates Z-ring formation, perhaps through the cross-linking of FtsZ protofilaments. Its function overlaps with FtsA. In Salinispora arenicola (strain CNS-205), this protein is Cell division protein SepF.